The sequence spans 426 residues: Endothelin-1 receptor (426 aa).

The first 20 residues, 1–20 (METFCLKVTFWVALVGYVIG), serve as a signal peptide directing secretion. The Extracellular portion of the chain corresponds to 21 to 79 (DHPESYSTNLSTPVDFTTFHGTELSFLVTTHRPTNLALPSNGSMHSYCPQQTKITSAFK). N-linked (GlcNAc...) asparagine glycosylation is found at Asn-29 and Asn-61. A helical membrane pass occupies residues 80 to 101 (YINTVISCTIFIVGMVGNATLL). Residues 102-111 (RIIYQNKCMR) lie on the Cytoplasmic side of the membrane. The helical transmembrane segment at 112–131 (NGPNALIASLALGDLIYVVI) threads the bilayer. The Extracellular portion of the chain corresponds to 132–158 (DLPINVFKLLAGRWPFDHNDFGVFLCK). The cysteines at positions 157 and 238 are disulfide-linked. The helical transmembrane segment at 159 to 180 (LFPFLQKSSVGITVLNLCALSV) threads the bilayer. The Cytoplasmic segment spans residues 181–204 (DRYRAVASWSRVQGIGIPLITAIE). The helical transmembrane segment at 205–228 (IVSIWILSFILAIPEAIGFVMVPF) threads the bilayer. Topologically, residues 229–255 (EYKGEQHKTCMLNATSKFMEFYQDVKD) are extracellular. An N-linked (GlcNAc...) asparagine glycan is attached at Asn-241. Residues 256-277 (WWLFGFYFCMPLVCTAIFYTLM) form a helical membrane-spanning segment. Topologically, residues 278-305 (TCEMLNRRNGSLRIALSEHLKQRREVAK) are cytoplasmic. The helical transmembrane segment at 306–327 (TVFCLVVIFALCWFPLHLSRIL) threads the bilayer. At 328 to 346 (KKTVYDEMDKNRCELLSFL) the chain is on the extracellular side. The chain crosses the membrane as a helical span at residues 347 to 371 (RLMDYIGINLATMNSCINPIALYFV). Residues 372-426 (SKKFKNCFQSCLCCCCYQSKSLMTSVPMNGTSIQWKNHEQNNHNTERSSHKDSIN) lie on the Cytoplasmic side of the membrane. The residue at position 424 (Ser-424) is a Phosphoserine.

The protein belongs to the G-protein coupled receptor 1 family. Endothelin receptor subfamily. EDNRA sub-subfamily. As to quaternary structure, interacts with HDAC7 and KAT5.

Its subcellular location is the cell membrane. Receptor for endothelin-1. Mediates its action by association with G proteins that activate a phosphatidylinositol-calcium second messenger system. The rank order of binding affinities for ET-A is: ET1 &gt; ET2 &gt;&gt; ET3. In Canis lupus familiaris (Dog), this protein is Endothelin-1 receptor.